The primary structure comprises 449 residues: tRNA-2-methylthio-N(6)-dimethylallyladenosine synthase (449 aa).

The 116-residue stretch at 4-119 (RTFHIETFGC…APQALDRLVE (116 aa)) folds into the MTTase N-terminal domain. Cys13, Cys48, Cys82, Cys158, Cys162, and Cys165 together coordinate [4Fe-4S] cluster. A Radical SAM core domain is found at 144–375 (GAVPASVFVN…QTLQNRLTER (232 aa)). The TRAM domain maps to 378–446 (QDMVGKKVEV…KHSLLAEQAG (69 aa)).

Belongs to the methylthiotransferase family. MiaB subfamily. As to quaternary structure, monomer. Requires [4Fe-4S] cluster as cofactor.

The protein localises to the cytoplasm. The catalysed reaction is N(6)-dimethylallyladenosine(37) in tRNA + (sulfur carrier)-SH + AH2 + 2 S-adenosyl-L-methionine = 2-methylsulfanyl-N(6)-dimethylallyladenosine(37) in tRNA + (sulfur carrier)-H + 5'-deoxyadenosine + L-methionine + A + S-adenosyl-L-homocysteine + 2 H(+). Catalyzes the methylthiolation of N6-(dimethylallyl)adenosine (i(6)A), leading to the formation of 2-methylthio-N6-(dimethylallyl)adenosine (ms(2)i(6)A) at position 37 in tRNAs that read codons beginning with uridine. The chain is tRNA-2-methylthio-N(6)-dimethylallyladenosine synthase from Nitratidesulfovibrio vulgaris (strain DP4) (Desulfovibrio vulgaris).